We begin with the raw amino-acid sequence, 499 residues long: Lysine--tRNA ligase (499 aa).

Positions 408 and 415 each coordinate Mg(2+).

Belongs to the class-II aminoacyl-tRNA synthetase family. As to quaternary structure, homodimer. Requires Mg(2+) as cofactor.

The protein resides in the cytoplasm. It carries out the reaction tRNA(Lys) + L-lysine + ATP = L-lysyl-tRNA(Lys) + AMP + diphosphate. The protein is Lysine--tRNA ligase of Bacillus cytotoxicus (strain DSM 22905 / CIP 110041 / 391-98 / NVH 391-98).